We begin with the raw amino-acid sequence, 271 residues long: Putative phosphoenolpyruvate synthase regulatory protein (271 aa).

151-158 (GVSRSGKT) serves as a coordination point for ADP.

It belongs to the pyruvate, phosphate/water dikinase regulatory protein family. PSRP subfamily.

The enzyme catalyses [pyruvate, water dikinase] + ADP = [pyruvate, water dikinase]-phosphate + AMP + H(+). The catalysed reaction is [pyruvate, water dikinase]-phosphate + phosphate + H(+) = [pyruvate, water dikinase] + diphosphate. Bifunctional serine/threonine kinase and phosphorylase involved in the regulation of the phosphoenolpyruvate synthase (PEPS) by catalyzing its phosphorylation/dephosphorylation. This is Putative phosphoenolpyruvate synthase regulatory protein from Burkholderia mallei (strain NCTC 10247).